Consider the following 557-residue polypeptide: Formate--tetrahydrofolate ligase (557 aa).

65–72 (TPAGEGKT) provides a ligand contact to ATP.

It belongs to the formate--tetrahydrofolate ligase family.

It carries out the reaction (6S)-5,6,7,8-tetrahydrofolate + formate + ATP = (6R)-10-formyltetrahydrofolate + ADP + phosphate. It participates in one-carbon metabolism; tetrahydrofolate interconversion. The polypeptide is Formate--tetrahydrofolate ligase (Methylobacterium radiotolerans (strain ATCC 27329 / DSM 1819 / JCM 2831 / NBRC 15690 / NCIMB 10815 / 0-1)).